The sequence spans 151 residues: Ribonuclease H (151 aa).

An RNase H type-1 domain is found at 2–143 (SDDWVEIYTD…ADLLANRGVV (142 aa)). Residues Asp-11, Glu-49, Asp-71, and Asp-135 each contribute to the Mg(2+) site.

Belongs to the RNase H family. Monomer. Mg(2+) serves as cofactor.

Its subcellular location is the cytoplasm. The catalysed reaction is Endonucleolytic cleavage to 5'-phosphomonoester.. Its function is as follows. Endonuclease that specifically degrades the RNA of RNA-DNA hybrids. This Stutzerimonas stutzeri (strain A1501) (Pseudomonas stutzeri) protein is Ribonuclease H.